Reading from the N-terminus, the 392-residue chain is Succinate--CoA ligase [ADP-forming] subunit beta (392 aa).

The region spanning 9–247 is the ATP-grasp domain; it reads KAILRKYGVA…VTEEDPLEVE (239 aa). Residues K49, 56–58, E102, L105, and E110 each bind ATP; that span reads GRG. Mg(2+)-binding residues include N202 and D216. Residues N267 and 324-326 each bind substrate; that span reads GIL.

This sequence belongs to the succinate/malate CoA ligase beta subunit family. In terms of assembly, heterotetramer of two alpha and two beta subunits. It depends on Mg(2+) as a cofactor.

The catalysed reaction is succinate + ATP + CoA = succinyl-CoA + ADP + phosphate. The enzyme catalyses GTP + succinate + CoA = succinyl-CoA + GDP + phosphate. It participates in carbohydrate metabolism; tricarboxylic acid cycle; succinate from succinyl-CoA (ligase route): step 1/1. In terms of biological role, succinyl-CoA synthetase functions in the citric acid cycle (TCA), coupling the hydrolysis of succinyl-CoA to the synthesis of either ATP or GTP and thus represents the only step of substrate-level phosphorylation in the TCA. The beta subunit provides nucleotide specificity of the enzyme and binds the substrate succinate, while the binding sites for coenzyme A and phosphate are found in the alpha subunit. The protein is Succinate--CoA ligase [ADP-forming] subunit beta of Koribacter versatilis (strain Ellin345).